A 112-amino-acid chain; its full sequence is Protein SMALL AUXIN UP-REGULATED RNA 10 (112 aa).

Belongs to the ARG7 family. In terms of tissue distribution, confined to the veins and petioles of rosette leaves and cauline leaves, and specifically expressed at the abaxial side of inflorescence branche; relocates to both the adaxial (Ad) and abaxial (Ab) sides of the branch in reduced red:far-red (R:FR) light, during shade. Also present in flowers.

It localises to the cell membrane. In terms of biological role, provide a mechanistic link between auxin and plasma membrane H(+)-ATPases (PM H(+)-ATPases, e.g. AHA1 and AHA2), and triggers PM H(+)-ATPases activity by promoting phosphorylation of their C-terminal autoinhibitory domain as a result of PP2C-D subfamily of type 2C phosphatases inhibition, thus leading to the acidification of the apoplast and the facilitation of solutes and water uptake to drive cell expansion. Triggers plant growth probably by promoting cell elongation. Regulates branch angles and bending. This is Protein SMALL AUXIN UP-REGULATED RNA 10 from Arabidopsis thaliana (Mouse-ear cress).